Reading from the N-terminus, the 408-residue chain is Tryptophan synthase beta chain (408 aa).

Lys103 carries the N6-(pyridoxal phosphate)lysine modification.

The protein belongs to the TrpB family. In terms of assembly, tetramer of two alpha and two beta chains. Pyridoxal 5'-phosphate serves as cofactor.

It carries out the reaction (1S,2R)-1-C-(indol-3-yl)glycerol 3-phosphate + L-serine = D-glyceraldehyde 3-phosphate + L-tryptophan + H2O. It functions in the pathway amino-acid biosynthesis; L-tryptophan biosynthesis; L-tryptophan from chorismate: step 5/5. Its function is as follows. The beta subunit is responsible for the synthesis of L-tryptophan from indole and L-serine. The chain is Tryptophan synthase beta chain from Koribacter versatilis (strain Ellin345).